Here is a 188-residue protein sequence, read N- to C-terminus: Selenoprotein S B (188 aa).

A helical membrane pass occupies residues 29-49 (EALSNYGWYILLGCIVIYFLI). The span at 116–125 (TWDRMQEGKS) shows a compositional bias: basic and acidic residues. Residues 116 to 188 (TWDRMQEGKS…RGPSSGGSUG (73 aa)) are disordered. The span at 136-147 (ASPRTSTSSSAP) shows a compositional bias: low complexity. A non-standard amino acid (selenocysteine) is located at residue selenocysteine 187.

This sequence belongs to the selenoprotein S family.

It localises to the endoplasmic reticulum membrane. The protein localises to the cytoplasm. Its function is as follows. Involved in the degradation process of misfolded endoplasmic reticulum (ER) luminal proteins. Participates in the transfer of misfolded proteins from the ER to the cytosol, where they are destroyed by the proteasome in a ubiquitin-dependent manner. The sequence is that of Selenoprotein S B (vimp-b) from Xenopus laevis (African clawed frog).